The chain runs to 218 residues: Phosphatidylserine decarboxylase proenzyme (218 aa).

The Schiff-base intermediate with substrate; via pyruvic acid role is filled by serine 183. Serine 183 is modified (pyruvic acid (Ser); by autocatalysis).

This sequence belongs to the phosphatidylserine decarboxylase family. PSD-A subfamily. As to quaternary structure, heterodimer of a large membrane-associated beta subunit and a small pyruvoyl-containing alpha subunit. The cofactor is pyruvate. In terms of processing, is synthesized initially as an inactive proenzyme. Formation of the active enzyme involves a self-maturation process in which the active site pyruvoyl group is generated from an internal serine residue via an autocatalytic post-translational modification. Two non-identical subunits are generated from the proenzyme in this reaction, and the pyruvate is formed at the N-terminus of the alpha chain, which is derived from the carboxyl end of the proenzyme. The post-translation cleavage follows an unusual pathway, termed non-hydrolytic serinolysis, in which the side chain hydroxyl group of the serine supplies its oxygen atom to form the C-terminus of the beta chain, while the remainder of the serine residue undergoes an oxidative deamination to produce ammonia and the pyruvoyl prosthetic group on the alpha chain.

It is found in the cell membrane. The enzyme catalyses a 1,2-diacyl-sn-glycero-3-phospho-L-serine + H(+) = a 1,2-diacyl-sn-glycero-3-phosphoethanolamine + CO2. The protein operates within phospholipid metabolism; phosphatidylethanolamine biosynthesis; phosphatidylethanolamine from CDP-diacylglycerol: step 2/2. Its function is as follows. Catalyzes the formation of phosphatidylethanolamine (PtdEtn) from phosphatidylserine (PtdSer). This chain is Phosphatidylserine decarboxylase proenzyme, found in Magnetococcus marinus (strain ATCC BAA-1437 / JCM 17883 / MC-1).